The primary structure comprises 913 residues: Eukaryotic translation initiation factor 3 subunit C (913 aa).

Positions 1–31 are disordered; it reads MSRFFANGSDSESESSEEEVQASNFNKANNF. Acidic residues predominate over residues 11-20; that stretch reads SESESSEEEV. The segment covering 21–31 has biased composition (polar residues); it reads QASNFNKANNF. Phosphoserine is present on residues serine 34, serine 165, serine 177, and serine 186. Disordered stretches follow at residues 157-195 and 208-285; these read FREAPDQESDVDEGEGEAHDSDAERAGADSDGGIGAGTG and PTKV…EDGE. Positions 162-171 are enriched in acidic residues; the sequence is DQESDVDEGE. The segment covering 172–184 has biased composition (basic and acidic residues); it reads GEAHDSDAERAGA. Positions 214-239 are enriched in acidic residues; the sequence is DEDDSDDSIDWDSDTESETESSEDEN. The segment covering 244–263 has biased composition (basic and acidic residues); the sequence is MRERFLKRTTEKEDKDDDKR. The segment covering 264-276 has biased composition (basic residues); the sequence is KDKRKEQKHKVRK. The region spanning 645 to 821 is the PCI domain; sequence FHMHINLELL…ETVVMHRSEP (177 aa). Residues 856-913 are disordered; the sequence is RGNMGNRDRGYNRNQNNQGGNWGGQRRDNRNQRNRNQRGHHKQQQQQQQQQVQTIEEE. Positions 887-898 are enriched in basic residues; the sequence is QRNRNQRGHHKQ.

It belongs to the eIF-3 subunit C family. In terms of assembly, component of the eukaryotic translation initiation factor 3 (eIF-3) complex. The eIF-3 complex interacts with pix.

It is found in the cytoplasm. In terms of biological role, component of the eukaryotic translation initiation factor 3 (eIF-3) complex, which is involved in protein synthesis of a specialized repertoire of mRNAs and, together with other initiation factors, stimulates binding of mRNA and methionyl-tRNAi to the 40S ribosome. The eIF-3 complex specifically targets and initiates translation of a subset of mRNAs involved in cell proliferation. This Drosophila virilis (Fruit fly) protein is Eukaryotic translation initiation factor 3 subunit C.